Reading from the N-terminus, the 836-residue chain is Probable RING finger protein 207 homolog (836 aa).

The segment at 8–42 (CTICKNDFEEPILFSCQHTTCRKCSNGSPSCKTCS) adopts an RING-type zinc-finger fold. The segment at 68 to 115 (EEMEQCANCEQITLPMFYCETCQQSLCLACRNVTHQARMFSSHKIISS) adopts a B box-type 1; atypical zinc-finger fold. Positions 73, 76, 97, and 102 each coordinate Zn(2+). The segment at 122–164 (YSSSLCKDHNEPYILYCSDVRKLVCIQCFNGRPLEERHSFISI) adopts a B box-type 2; degenerate zinc-finger fold. Positions 527–557 (QNRIMAIEKEEENRRLNQEAKKKEELAGQSA) form a coiled coil. The span at 540–552 (RRLNQEAKKKEEL) shows a compositional bias: basic and acidic residues. The segment at 540–571 (RRLNQEAKKKEELAGQSAAMKSLKHGKTKRKE) is disordered. Positions 561–571 (SLKHGKTKRKE) are enriched in basic residues.

The protein is Probable RING finger protein 207 homolog of Caenorhabditis briggsae.